Reading from the N-terminus, the 388-residue chain is Glutamine transporter 2 (388 aa).

11 helical membrane-spanning segments follow: residues 5 to 27 (LFGSALILSGTALGAGMLAIPMV), 31 to 53 (FGLFYSTLLMLIICAGTTYAALL), 86 to 106 (LFYLLLFCMLIAYILGAADLI), 121 to 141 (FAQVAFTLFASAFVVCGTQII), 147 to 167 (LLFFFMISMLVLTLIILIPGM), 186 to 206 (TSTILFTSFASMPVIPSLVAY), 218 to 238 (MVILGSIIPLICYLVWLYAVV), 268 to 288 (IILSIFTSLALLTSFLGVAMA), 302 to 322 (IVTYVCTFILPLLGAGLAADQ), 326 to 346 (VLGYAGVILVFLAIFIPLAMV), and 368 to 388 (GGKLALGLTLLFGLLLLISQI).

Belongs to the amino acid/polyamine transporter 2 family.

Its subcellular location is the cell inner membrane. Functionally, seems to be involved in glutamine transport. Complements an E.coli glnP deletion mutant. In Aliivibrio fischeri (strain ATCC 700601 / ES114) (Vibrio fischeri), this protein is Glutamine transporter 2.